Here is a 107-residue protein sequence, read N- to C-terminus: Cytochrome c2 (107 aa).

Cysteine 14, cysteine 17, histidine 18, and methionine 80 together coordinate heme c.

This sequence belongs to the cytochrome c family. Binds 1 heme c group covalently per subunit.

Its function is as follows. Cytochrome c2 is found mainly in purple, non-sulfur, photosynthetic bacteria where it functions as the electron donor to the oxidized bacteriochlorophyll in the photophosphorylation pathway. However, it may also have a role in the respiratory chain and is found in some non-photosynthetic bacteria. The chain is Cytochrome c2 from Rhodoblastus acidophilus (Rhodopseudomonas acidophila).